A 99-amino-acid chain; its full sequence is Large ribosomal subunit protein eL30 (99 aa).

Belongs to the eukaryotic ribosomal protein eL30 family. In terms of assembly, part of the 50S ribosomal subunit.

This Pyrococcus furiosus (strain ATCC 43587 / DSM 3638 / JCM 8422 / Vc1) protein is Large ribosomal subunit protein eL30.